The sequence spans 79 residues: Translational regulator CsrA (79 aa).

Belongs to the CsrA/RsmA family. As to quaternary structure, homodimer; the beta-strands of each monomer intercalate to form a hydrophobic core, while the alpha-helices form wings that extend away from the core.

It localises to the cytoplasm. A translational regulator that binds mRNA to regulate translation initiation and/or mRNA stability. Usually binds in the 5'-UTR at or near the Shine-Dalgarno sequence preventing ribosome-binding, thus repressing translation. Its main target seems to be the major flagellin gene, while its function is anatagonized by FliW. The polypeptide is Translational regulator CsrA (Maridesulfovibrio salexigens (strain ATCC 14822 / DSM 2638 / NCIMB 8403 / VKM B-1763) (Desulfovibrio salexigens)).